The primary structure comprises 726 residues: Catalase-peroxidase (726 aa).

Positions 85 to 208 (WHSAGSYRIH…FAATEMGLIY (124 aa)) form a cross-link, tryptophyl-tyrosyl-methioninium (Trp-Tyr) (with M-234). H86 (proton acceptor) is an active-site residue. Positions 208 to 234 (YVNPEGPMGNPDPSGSAKEIRLAFTRM) form a cross-link, tryptophyl-tyrosyl-methioninium (Tyr-Met) (with W-85). H249 contributes to the heme b binding site.

It belongs to the peroxidase family. Peroxidase/catalase subfamily. In terms of assembly, homodimer or homotetramer. Heme b is required as a cofactor. In terms of processing, formation of the three residue Trp-Tyr-Met cross-link is important for the catalase, but not the peroxidase activity of the enzyme.

It catalyses the reaction H2O2 + AH2 = A + 2 H2O. The enzyme catalyses 2 H2O2 = O2 + 2 H2O. Functionally, bifunctional enzyme with both catalase and broad-spectrum peroxidase activity. The protein is Catalase-peroxidase of Pseudothermotoga lettingae (strain ATCC BAA-301 / DSM 14385 / NBRC 107922 / TMO) (Thermotoga lettingae).